The following is a 544-amino-acid chain: Methionine--tRNA ligase (544 aa).

Residues 10–20 (PYANGSLHLGH) carry the 'HIGH' region motif. Positions 141, 144, 153, and 156 each coordinate Zn(2+). Positions 329–333 (KLSTS) match the 'KMSKS' region motif. An ATP-binding site is contributed by Thr332.

It belongs to the class-I aminoacyl-tRNA synthetase family. MetG type 1 subfamily. Monomer. Zn(2+) is required as a cofactor.

The protein localises to the cytoplasm. It carries out the reaction tRNA(Met) + L-methionine + ATP = L-methionyl-tRNA(Met) + AMP + diphosphate. Is required not only for elongation of protein synthesis but also for the initiation of all mRNA translation through initiator tRNA(fMet) aminoacylation. In Bacillus cereus (strain G9842), this protein is Methionine--tRNA ligase.